A 384-amino-acid polypeptide reads, in one-letter code: Probable zinc-binding alcohol dehydrogenase Rv1895 (384 aa).

6 residues coordinate Zn(2+): Cys38, His59, Cys89, Cys92, Cys95, and Cys103.

It belongs to the zinc-containing alcohol dehydrogenase family. Zn(2+) serves as cofactor.

The enzyme catalyses a primary alcohol + NAD(+) = an aldehyde + NADH + H(+). It carries out the reaction a secondary alcohol + NAD(+) = a ketone + NADH + H(+). The protein is Probable zinc-binding alcohol dehydrogenase Rv1895 of Mycobacterium tuberculosis (strain ATCC 25618 / H37Rv).